We begin with the raw amino-acid sequence, 279 residues long: NADPH-dependent 7-cyano-7-deazaguanine reductase (279 aa).

Residue 86 to 88 participates in substrate binding; sequence IES. 88–89 is a binding site for NADPH; sequence SK. The active-site Thioimide intermediate is the C187. D194 serves as the catalytic Proton donor. 226–227 provides a ligand contact to substrate; it reads HE. Position 255 to 256 (255 to 256) interacts with NADPH; sequence RG.

The protein belongs to the GTP cyclohydrolase I family. QueF type 2 subfamily. As to quaternary structure, homodimer.

It localises to the cytoplasm. The catalysed reaction is 7-aminomethyl-7-carbaguanine + 2 NADP(+) = 7-cyano-7-deazaguanine + 2 NADPH + 3 H(+). It functions in the pathway tRNA modification; tRNA-queuosine biosynthesis. Catalyzes the NADPH-dependent reduction of 7-cyano-7-deazaguanine (preQ0) to 7-aminomethyl-7-deazaguanine (preQ1). In Actinobacillus pleuropneumoniae serotype 5b (strain L20), this protein is NADPH-dependent 7-cyano-7-deazaguanine reductase.